Consider the following 94-residue polypeptide: RING finger protein Z (94 aa).

The segment at 1-22 (MGNCNKPPKRPPNTQTSAAQPS) is disordered. Gly-2 is lipidated: N-myristoyl glycine; by host. The segment at 39–75 (CKCCWFADTNLITCNDHYLCLRCHQTMLRNSELCHIC) adopts an RING-type; atypical zinc-finger fold. The PTAP/PSAP motif signature appears at 89-92 (PSAP).

Belongs to the arenaviridae Z protein family. As to quaternary structure, interacts with protein NP; this interaction probably directs the encapsidated genome to budding sites. Interacts (via RING domain) with polymerase L; this interaction inhibits viral transcription and replication, Z partially blocks the product exit tunnel for the releasing nascent RNA product. Interacts with the glycoprotein complex; this interaction plays a role in virion budding. Interacts with host eIF4E; this interaction results in eIF4E reduced affinity for its substrate, the 5'-m7 G cap structure. Interacts (via late-budding domain) with host TSG101; this interaction is essential for budding and release of viral particles. Interacts with host RPLP0; this interaction may serve to load ribosome-like particles inside the virion. Interacts with host PML; this interaction induces PML bodies redistribution in the cytoplasm upon viral infection. In terms of processing, myristoylation is required for the role of RING finger protein Z in assembly and budding.

It is found in the virion. Its subcellular location is the host cytoplasm. The protein localises to the host perinuclear region. It localises to the host cell membrane. Its function is as follows. Plays a crucial role in virion assembly and budding. Expressed late in the virus life cycle, it acts as an inhibitor of viral transcription and RNA synthesis by interacting with the viral polymerase L. Presumably recruits the NP encapsidated genome to cellular membranes at budding sites via direct interaction with NP. Plays critical roles in the final steps of viral release by interacting with host TSG101, a member of the vacuolar protein-sorting pathway and using other cellular host proteins involved in vesicle formation pathway. The budding of the virus progeny occurs after association of protein Z with the viral glycoprotein complex SSP-GP1-GP2 at the cell periphery, step that requires myristoylation of protein Z. Also selectively represses protein production by associating with host eIF4E. In cell-based minigenome assay, has an inhibitory effect on the ribonucleoprotein machinery (vRNP), which is responsible for the replication and transcription of the viral genome. The sequence is that of RING finger protein Z from Calomys callosus (Large vesper mouse).